Here is a 446-residue protein sequence, read N- to C-terminus: D(1A) dopamine receptor (446 aa).

At 1-22 the chain is on the extracellular side; it reads MAPNTSTMDETGLPVERDFSFR. N-linked (GlcNAc...) asparagine glycosylation is present at asparagine 4. The helical transmembrane segment at 23-48 threads the bilayer; sequence ILTACFLSLLILSTLLGNTLVCAAVI. The Cytoplasmic segment spans residues 49–59; sequence RFRHLRSKVTN. A helical transmembrane segment spans residues 60 to 86; it reads FFVISLAVSDLLVAVLVMPWKAVAEIA. The Extracellular segment spans residues 87–95; the sequence is GFWPFGSFC. A disulfide bond links cysteine 95 and cysteine 186. Residues 96–118 traverse the membrane as a helical segment; it reads NIWVAFDIMCSTASILNLCVISV. Topologically, residues 119-137 are cytoplasmic; that stretch reads DRYWAISSPFQYERKMTPK. Residues 138-162 traverse the membrane as a helical segment; sequence AAFILISVAWTLSVLISFIPVQLSW. At 163 to 192 the chain is on the extracellular side; it reads HKAKPTWPLDGNFTSLEDAEDDNCDTRLSR. Residues 193 to 218 form a helical membrane-spanning segment; it reads TYAISSSLISFYIPVAIMIVTYTSIY. The Cytoplasmic portion of the chain corresponds to 219 to 272; sequence RIAQKQIRRISALERAAVHAKNCQTTTGNGNPVECSQSESSFKMSFKRETKVLK. The chain crosses the membrane as a helical span at residues 273–299; that stretch reads TLSVIMGVFVCCWLPFFISNCMVPFCG. Residues 300 to 312 lie on the Extracellular side of the membrane; the sequence is SEETQPFCIDSIT. Residues 313–337 traverse the membrane as a helical segment; sequence FDVFVWFGWANSSLNPIIYAFNADF. Residues 338 to 446 are Cytoplasmic-facing; sequence QKAFSTLLGC…PVTHSGQHST (109 aa). 2 S-palmitoyl cysteine lipidation sites follow: cysteine 347 and cysteine 351. Serine 441 bears the Phosphoserine mark.

It belongs to the G-protein coupled receptor 1 family. Interacts with DNAJC14 via its C-terminus. Interacts with DRD2. Interacts with DORIP1.

The protein resides in the cell membrane. Its subcellular location is the endoplasmic reticulum membrane. The protein localises to the cell projection. It localises to the cilium membrane. It is found in the dendrite. The protein resides in the dendritic spine. In terms of biological role, dopamine receptor whose activity is mediated by G proteins which activate adenylyl cyclase. The sequence is that of D(1A) dopamine receptor (Drd1) from Mus musculus (Mouse).